Here is a 72-residue protein sequence, read N- to C-terminus: Sec-independent protein translocase protein TatA (72 aa).

The chain crosses the membrane as a helical span at residues 1–21; sequence MAGLSIWHVVIFAIVVILLFG. The disordered stretch occupies residues 47–72; it reads DEAASLNSPRTIDAQVKTSESTSVKS. The span at 51 to 72 shows a compositional bias: polar residues; that stretch reads SLNSPRTIDAQVKTSESTSVKS.

The protein belongs to the TatA/E family. The Tat system comprises two distinct complexes: a TatABC complex, containing multiple copies of TatA, TatB and TatC subunits, and a separate TatA complex, containing only TatA subunits. Substrates initially bind to the TatABC complex, which probably triggers association of the separate TatA complex to form the active translocon.

Its subcellular location is the cell inner membrane. In terms of biological role, part of the twin-arginine translocation (Tat) system that transports large folded proteins containing a characteristic twin-arginine motif in their signal peptide across membranes. TatA could form the protein-conducting channel of the Tat system. This chain is Sec-independent protein translocase protein TatA, found in Acinetobacter baumannii (strain AB307-0294).